A 338-amino-acid polypeptide reads, in one-letter code: Heat shock factor 2-binding protein (338 aa).

Residues 1–20 form a disordered region; that stretch reads MAATVGDGSGTEEACRNMES. Residues 12–126 are a coiled coil; it reads EEACRNMESK…LLQQAEYCTQ (115 aa). The interaction with BRME1 stretch occupies residues 18 to 55; sequence MESKEEFVKVRKKDLERLTTEVMQIRDFLPRILNGELL. Positions 87 to 338 are interaction with BRCA2; that stretch reads ARLETAQADS…EDLRALDCNV (252 aa).

As to quaternary structure, interacts (via C-terminus) with BNC1. Associates with HSF2. The interaction seems to occur between the trimerization domain of HSF2 and the N-terminal hydrophilic region of HSF2BP. Interacts (via N-terminus) with BRME1. Interacts with BRCA2 and BRME1; the interactions are direct and allow the formation of a ternary complex. The complex BRME1:HSF2BP:BRCA2 interacts with SPATA22, MEIOB and RAD51. In terms of processing, sumoylated by UBE2I in response to MEKK1-mediated stimuli. As to expression, expressed in testis and, to a lesser extent, in lung and muscle.

Its subcellular location is the cytoplasm. It localises to the chromosome. In terms of biological role, meiotic recombination factor component of recombination bridges involved in meiotic double-strand break repair. Modulates the localization of recombinases DMC1:RAD51 to meiotic double-strand break (DSB) sites through the interaction with BRCA2 and its recruitment during meiotic recombination. Indispensable for the DSB repair, homologous synapsis, and crossover formation that are needed for progression past metaphase I, is essential for spermatogenesis and male fertility. Required for proper recombinase recruitment in female meiosis. Inhibits BNC1 transcriptional activity during spermatogenesis, probably by sequestering it in the cytoplasm. May be involved in modulating HSF2 activation in testis. This is Heat shock factor 2-binding protein from Mus musculus (Mouse).